A 307-amino-acid chain; its full sequence is Polysialic acid O-acetyltransferase (307 aa).

Over residues 1 to 90 (MLRLKTQDSR…LKTQDSRLKT (90 aa)) the composition is skewed to basic and acidic residues. Positions 1–95 (MLRLKTQDSR…SRLKTQDSFS (95 aa)) are disordered. A run of 13 repeats spans residues 3-9 (RLKTQDS), 10-16 (RLKTQDS), 17-23 (RLKTQDS), 24-30 (RLKTQDS), 31-37 (RLKTQDS), 38-44 (RLKTQDS), 45-51 (RLKTQDS), 52-58 (RLKTQDS), 59-65 (RLKTQDS), 66-72 (RLKTQDS), 73-79 (RLKTQDS), 80-86 (RLKTQDS), and 87-93 (RLKTQDS). The segment at 3–93 (RLKTQDSRLK…QDSRLKTQDS (91 aa)) is 13 X 7 AA tandem repeat of RLKTQDS encoded by a 7 nucleotide repeat. Residues 208–210 (DGH), R237, K243, K261, and K278 contribute to the acetyl-CoA site.

It belongs to the transferase hexapeptide repeat family. As to quaternary structure, homotrimer. Hexamer formed by two homotrimers.

The enzyme catalyses [N-acetyl-alpha-D-neuraminosyl-(2-&gt;8)](n) + n acetyl-CoA = [N,O(9)-diacetyl-alpha-D-neuraminosyl-(2-&gt;8)](n) + n CoA. It carries out the reaction [N-acetyl-alpha-D-neuraminosyl-(2-&gt;8)](n) + n acetyl-CoA = [O(7),N-diacetyl-alpha-D-neuraminosyl-(2-&gt;8)](n) + n CoA. In terms of biological role, catalyzes the O-acetylation of capsular polymeric sialic acid. Shows high substrate specificity toward polymers of sialic acid that contains a large number of residues. In Escherichia coli O1:K1 / APEC, this protein is Polysialic acid O-acetyltransferase.